The sequence spans 635 residues: MIKITLKDGKVMEFEEGIKISDIAMKISPALYKKALAAKIDGETVDLMTELHKDSSLEILTFEDEMGKWALRHTGAHILAQAVKRLYPEVKLAIGPAIDTGFYYDFEADFTFTPEMLEKIEAEIKKIIKENHKLERFELPREEAINLMKEKNEDYKVELIEDLPEGEVISFYKQGDFTDLCAGPHVPSTGKVKSVKLLSLAGAYWRGDENNKMLQRIYGTAFTKKSELDEYLNMLEEAKKRDHRKLGKELDLFSIHEEGPGFPFFHPKGMIIRNILENFWREEHTKAGYQEIRTPLILNEALWHQSGHWDHYKENMYFTNIDDGDYAIKPMNCPGGILVYKNSMHSYRDLPLRLSELGIVHRHELSGALHGLMRVRCFTQDDAHLYMTKEQIKEEIVGIIKLIDKFYKLFGFEYFVELSTRPEDSMGSDEDWEIATNGLREALDSIGKEYRVNEGDGAFYGPKIDFHLKDCIGRTWQCGTIQLDFQMPERFDLSYIGADGEKHRPVMVHRTIYGSVERFIGILIEQYAGAFPTWLAPVQVKLMNITDAQYDYLKKVEEALKENNIRVEIDTRNEKIGYKIREAQLQKVPYMLILGDKEVEAGKVAVRSRKDGDLGAISLEEFIEKIKNEIKVKTN.

The TGS domain occupies 1–61; it reads MIKITLKDGK…HKDSSLEILT (61 aa). The catalytic stretch occupies residues 242–532; that stretch reads DHRKLGKELD…LIEQYAGAFP (291 aa). The Zn(2+) site is built by cysteine 333, histidine 384, and histidine 509.

This sequence belongs to the class-II aminoacyl-tRNA synthetase family. Homodimer. Zn(2+) serves as cofactor.

It localises to the cytoplasm. The catalysed reaction is tRNA(Thr) + L-threonine + ATP = L-threonyl-tRNA(Thr) + AMP + diphosphate + H(+). In terms of biological role, catalyzes the attachment of threonine to tRNA(Thr) in a two-step reaction: L-threonine is first activated by ATP to form Thr-AMP and then transferred to the acceptor end of tRNA(Thr). Also edits incorrectly charged L-seryl-tRNA(Thr). This chain is Threonine--tRNA ligase, found in Clostridium botulinum (strain 657 / Type Ba4).